Here is a 456-residue protein sequence, read N- to C-terminus: 3-isopropylmalate dehydratase large subunit (456 aa).

[4Fe-4S] cluster-binding residues include C336, C396, and C399.

The protein belongs to the aconitase/IPM isomerase family. LeuC type 1 subfamily. In terms of assembly, heterodimer of LeuC and LeuD. [4Fe-4S] cluster is required as a cofactor.

It catalyses the reaction (2R,3S)-3-isopropylmalate = (2S)-2-isopropylmalate. It participates in amino-acid biosynthesis; L-leucine biosynthesis; L-leucine from 3-methyl-2-oxobutanoate: step 2/4. Its function is as follows. Catalyzes the isomerization between 2-isopropylmalate and 3-isopropylmalate, via the formation of 2-isopropylmaleate. The protein is 3-isopropylmalate dehydratase large subunit of Staphylococcus saprophyticus subsp. saprophyticus (strain ATCC 15305 / DSM 20229 / NCIMB 8711 / NCTC 7292 / S-41).